A 430-amino-acid chain; its full sequence is 3-phosphoshikimate 1-carboxyvinyltransferase (430 aa).

Residues K21, S22, and R26 each coordinate 3-phosphoshikimate. K21 provides a ligand contact to phosphoenolpyruvate. Positions 94 and 122 each coordinate phosphoenolpyruvate. Residues S168, Q170, D315, and K342 each coordinate 3-phosphoshikimate. Q170 provides a ligand contact to phosphoenolpyruvate. The Proton acceptor role is filled by D315. Phosphoenolpyruvate is bound by residues R346 and R389.

This sequence belongs to the EPSP synthase family. Monomer.

The protein resides in the cytoplasm. It carries out the reaction 3-phosphoshikimate + phosphoenolpyruvate = 5-O-(1-carboxyvinyl)-3-phosphoshikimate + phosphate. It participates in metabolic intermediate biosynthesis; chorismate biosynthesis; chorismate from D-erythrose 4-phosphate and phosphoenolpyruvate: step 6/7. Its function is as follows. Catalyzes the transfer of the enolpyruvyl moiety of phosphoenolpyruvate (PEP) to the 5-hydroxyl of shikimate-3-phosphate (S3P) to produce enolpyruvyl shikimate-3-phosphate and inorganic phosphate. This is 3-phosphoshikimate 1-carboxyvinyltransferase from Salinibacter ruber (strain DSM 13855 / M31).